The sequence spans 284 residues: Homeobox protein six1 (284 aa).

A DNA-binding region (homeobox) is located at residues 124 to 183 (GEETSYCFKEKSRGVLREWYAHNPYPSPREKRELAEATGLTTTQVSNWFKNRRQRDRAAE). Residues 168–230 (VSNWFKNRRQ…SPPQSPDQNS (63 aa)) form a disordered region. Residues 179-190 (DRAAEAKERENT) are compositionally biased toward basic and acidic residues. The span at 191–202 (ENNNTSTNKQNQ) shows a compositional bias: low complexity.

This sequence belongs to the SIX/Sine oculis homeobox family.

Its subcellular location is the nucleus. It localises to the cytoplasm. Transcription factor that is involved in the regulation of cell proliferation, apoptosis and embryonic development. Depending on context, functions as a transcriptional repressor or activator. Required for the normal formation of pre-placodal ectoderm. The chain is Homeobox protein six1 (six1) from Xenopus laevis (African clawed frog).